The following is a 485-amino-acid chain: Aspartyl/glutamyl-tRNA(Asn/Gln) amidotransferase subunit B (485 aa).

Belongs to the GatB/GatE family. GatB subfamily. In terms of assembly, heterotrimer of A, B and C subunits.

It catalyses the reaction L-glutamyl-tRNA(Gln) + L-glutamine + ATP + H2O = L-glutaminyl-tRNA(Gln) + L-glutamate + ADP + phosphate + H(+). It carries out the reaction L-aspartyl-tRNA(Asn) + L-glutamine + ATP + H2O = L-asparaginyl-tRNA(Asn) + L-glutamate + ADP + phosphate + 2 H(+). Functionally, allows the formation of correctly charged Asn-tRNA(Asn) or Gln-tRNA(Gln) through the transamidation of misacylated Asp-tRNA(Asn) or Glu-tRNA(Gln) in organisms which lack either or both of asparaginyl-tRNA or glutaminyl-tRNA synthetases. The reaction takes place in the presence of glutamine and ATP through an activated phospho-Asp-tRNA(Asn) or phospho-Glu-tRNA(Gln). The protein is Aspartyl/glutamyl-tRNA(Asn/Gln) amidotransferase subunit B of Borrelia recurrentis (strain A1).